The sequence spans 564 residues: Dihydropyrimidinase-related protein 5 (564 aa).

T509 and T514 each carry phosphothreonine. Phosphoserine is present on residues S532 and S538. R559 bears the Omega-N-methylarginine mark.

Belongs to the metallo-dependent hydrolases superfamily. Hydantoinase/dihydropyrimidinase family. As to quaternary structure, homotetramer, and heterotetramer with other DPYS-like proteins. Interacts with DPYSL2, DPYSL3 and DPYSL4. Interacts with MAP2 and TUBB3. In terms of tissue distribution, highly expressed in embryonic and early postnatal brain and spinal cord.

Its subcellular location is the cytoplasm. Its function is as follows. Involved in the negative regulation of dendrite outgrowth. The sequence is that of Dihydropyrimidinase-related protein 5 (Dpysl5) from Rattus norvegicus (Rat).